The primary structure comprises 249 residues: Probable septum site-determining protein MinC (249 aa).

Residues 116-149 form a disordered region; it reads AAVSPPPPPPPPPARAEPAAPVARPAPGRMQRNA. Residues 119–130 are compositionally biased toward pro residues; that stretch reads SPPPPPPPPPAR. Over residues 131–142 the composition is skewed to low complexity; sequence AEPAAPVARPAP.

Belongs to the MinC family. As to quaternary structure, interacts with MinD and FtsZ.

In terms of biological role, cell division inhibitor that blocks the formation of polar Z ring septums. Rapidly oscillates between the poles of the cell to destabilize FtsZ filaments that have formed before they mature into polar Z rings. Prevents FtsZ polymerization. The sequence is that of Probable septum site-determining protein MinC from Xanthomonas campestris pv. campestris (strain ATCC 33913 / DSM 3586 / NCPPB 528 / LMG 568 / P 25).